The following is an 815-amino-acid chain: Leucine--tRNA ligase (815 aa).

Residues 41 to 51 (PYPSGTLHVGH) carry the 'HIGH' region motif. Residues 576-580 (KMSKS) carry the 'KMSKS' region motif. K579 provides a ligand contact to ATP.

Belongs to the class-I aminoacyl-tRNA synthetase family.

It localises to the cytoplasm. The catalysed reaction is tRNA(Leu) + L-leucine + ATP = L-leucyl-tRNA(Leu) + AMP + diphosphate. In Pseudothermotoga lettingae (strain ATCC BAA-301 / DSM 14385 / NBRC 107922 / TMO) (Thermotoga lettingae), this protein is Leucine--tRNA ligase.